The sequence spans 336 residues: F420-dependent glucose-6-phosphate dehydrogenase (336 aa).

Position 39 (Asp-39) interacts with coenzyme F420-(gamma-Glu)n. The active-site Proton donor is the His-40. Coenzyme F420-(gamma-Glu)n contacts are provided by residues Thr-76 and 107–108; that span reads TG. The Proton acceptor role is filled by Glu-109. Residues Asn-112, 177–178, and 180–181 contribute to the coenzyme F420-(gamma-Glu)n site; these read GG and AV. Substrate-binding residues include Thr-195, Lys-198, Lys-259, and Arg-283.

Belongs to the F420-dependent glucose-6-phosphate dehydrogenase family. In terms of assembly, homodimer.

It carries out the reaction oxidized coenzyme F420-(gamma-L-Glu)(n) + D-glucose 6-phosphate + H(+) = 6-phospho-D-glucono-1,5-lactone + reduced coenzyme F420-(gamma-L-Glu)(n). Its function is as follows. Catalyzes the coenzyme F420-dependent oxidation of glucose 6-phosphate (G6P) to 6-phosphogluconolactone. Appears to have a role in resistance to oxidative stress, via its consumption of G6P that serves as a source of reducing power to combat oxidative stress in mycobacteria. More precisely, is likely involved in a F420-dependent anti-oxidant mechanism that protects M.tuberculosis against oxidative stress and bactericidal agents. Is essential for the bioreductive activation of the bicyclic 4-nitroimidazole prodrug PA-824 (nitroimidazo-oxazine) developed for anti-tuberculosis therapy against both replicating and persistent bacteria. It does not interact directly with PA-824 but, rather, provides reduced F420 to the deazaflavin-dependent nitroreductase Ddn, which in turn activates PA-824. This Mycobacterium tuberculosis (strain CDC 1551 / Oshkosh) protein is F420-dependent glucose-6-phosphate dehydrogenase (fgd1).